Here is a 445-residue protein sequence, read N- to C-terminus: Methionine aminopeptidase 2 (445 aa).

A disordered region spans residues 1–80 (MAAQVASGVG…TSKVQTEPPR (80 aa)). Residues 57–71 (AKKKKKKTKKKKKGT) show a composition bias toward basic residues. H195 is a binding site for substrate. Residues D215, D226, and H295 each contribute to the a divalent metal cation site. A substrate-binding site is contributed by H303. 2 residues coordinate a divalent metal cation: E331 and E426.

The protein belongs to the peptidase M24A family. Methionine aminopeptidase eukaryotic type 2 subfamily. Co(2+) is required as a cofactor. It depends on Zn(2+) as a cofactor. The cofactor is Mn(2+). Fe(2+) serves as cofactor.

It is found in the cytoplasm. It carries out the reaction Release of N-terminal amino acids, preferentially methionine, from peptides and arylamides.. Its function is as follows. Cotranslationally removes the N-terminal methionine from nascent proteins. The N-terminal methionine is often cleaved when the second residue in the primary sequence is small and uncharged (Met-Ala-, Cys, Gly, Pro, Ser, Thr, or Val). This is Methionine aminopeptidase 2 from Paracoccidioides brasiliensis (strain Pb03).